Reading from the N-terminus, the 261-residue chain is Proteasome subunit alpha (261 aa).

The segment at 242-261 (NEENKKEEENREETKEKQEE) is disordered.

Belongs to the peptidase T1A family. As to quaternary structure, the 20S proteasome core is composed of 14 alpha and 14 beta subunits that assemble into four stacked heptameric rings, resulting in a barrel-shaped structure. The two inner rings, each composed of seven catalytic beta subunits, are sandwiched by two outer rings, each composed of seven alpha subunits. The catalytic chamber with the active sites is on the inside of the barrel. Has a gated structure, the ends of the cylinder being occluded by the N-termini of the alpha-subunits. Is capped at one or both ends by the proteasome regulatory ATPase, PAN.

It is found in the cytoplasm. With respect to regulation, the formation of the proteasomal ATPase PAN-20S proteasome complex, via the docking of the C-termini of PAN into the intersubunit pockets in the alpha-rings, triggers opening of the gate for substrate entry. Interconversion between the open-gate and close-gate conformations leads to a dynamic regulation of the 20S proteasome proteolysis activity. Component of the proteasome core, a large protease complex with broad specificity involved in protein degradation. The M.jannaschii proteasome is able to cleave oligopeptides after Glu, Asp, Tyr, Phe, Trp, slightly after Arg, but not after Ala. Thus, displays caspase-like and chymotrypsin-like activities and low level of trypsin-like activity. The protein is Proteasome subunit alpha of Methanocaldococcus jannaschii (strain ATCC 43067 / DSM 2661 / JAL-1 / JCM 10045 / NBRC 100440) (Methanococcus jannaschii).